The sequence spans 325 residues: Transaldolase (325 aa).

Lys125 (schiff-base intermediate with substrate) is an active-site residue.

It belongs to the transaldolase family. Type 2 subfamily.

The protein localises to the cytoplasm. The enzyme catalyses D-sedoheptulose 7-phosphate + D-glyceraldehyde 3-phosphate = D-erythrose 4-phosphate + beta-D-fructose 6-phosphate. It participates in carbohydrate degradation; pentose phosphate pathway; D-glyceraldehyde 3-phosphate and beta-D-fructose 6-phosphate from D-ribose 5-phosphate and D-xylulose 5-phosphate (non-oxidative stage): step 2/3. Its function is as follows. Transaldolase is important for the balance of metabolites in the pentose-phosphate pathway. This is Transaldolase from Campylobacter jejuni subsp. jejuni serotype O:23/36 (strain 81-176).